Consider the following 180-residue polypeptide: dCTP deaminase, dUMP-forming (180 aa).

DCTP contacts are provided by residues 100–105, aspartate 117, 125–127, glutamine 146, tyrosine 160, and glutamine 167; these read RSSLGR and TLE. Residue glutamate 127 is the Proton donor/acceptor of the active site.

The protein belongs to the dCTP deaminase family. In terms of assembly, homotrimer.

The enzyme catalyses dCTP + 2 H2O = dUMP + NH4(+) + diphosphate. Its pathway is pyrimidine metabolism; dUMP biosynthesis; dUMP from dCTP: step 1/1. In terms of biological role, bifunctional enzyme that catalyzes both the deamination of dCTP to dUTP and the hydrolysis of dUTP to dUMP without releasing the toxic dUTP intermediate. This is dCTP deaminase, dUMP-forming from Persephonella marina (strain DSM 14350 / EX-H1).